The sequence spans 134 residues: ATP synthase epsilon chain (134 aa).

This sequence belongs to the ATPase epsilon chain family. F-type ATPases have 2 components, CF(1) - the catalytic core - and CF(0) - the membrane proton channel. CF(1) has five subunits: alpha(3), beta(3), gamma(1), delta(1), epsilon(1). CF(0) has three main subunits: a, b and c.

Its subcellular location is the cellular thylakoid membrane. Produces ATP from ADP in the presence of a proton gradient across the membrane. The chain is ATP synthase epsilon chain from Prochlorococcus marinus (strain AS9601).